Here is an 893-residue protein sequence, read N- to C-terminus: POU domain protein 2, isoform B (893 aa).

The segment at 586–668 is disordered; the sequence is QMKQQQREDP…STPKPTSGLT (83 aa). Positions 602-617 are enriched in low complexity; the sequence is PLAKSPLRSPSLSPVP. The segment covering 623–646 has biased composition (polar residues); it reads QQRTPPNSMTANSLGMSSAVMTPN. The segment covering 647-665 has biased composition (low complexity); that stretch reads TPSMQQQPQLQQSTPKPTS. The region spanning 681–755 is the POU-specific domain; that stretch reads EETTDLEELE…LLQKWLEDAD (75 aa). A DNA-binding region (homeobox) is located at residues 786-845; sequence RRKKRTSIETTVRTTLEKAFLMNCKPTSEEISQLSERLNMDKEVIRVWFCNRRQKEKRIN.

Belongs to the POU transcription factor family. Class-2 subfamily. As to expression, initial expression in cellular blastoderm stage, then in ectodermal stripes during germband extension. Broad expression in the neuroectoderm followed by limitation to discrete subsets of CNS cells, and expression in specific PNS neurons and support cells.

The protein localises to the nucleus. In terms of biological role, DNA-binding regulatory protein implicated in early development. Involved in neuronal cell fate decision. May act as an octamer-dependent activator of transcription. Could also play an early role in specific ectodermal cells, and a subsequent role in the embryonic nervous system. In Drosophila melanogaster (Fruit fly), this protein is POU domain protein 2, isoform B.